A 170-amino-acid polypeptide reads, in one-letter code: uncharacterized protein (170 aa).

This is an uncharacterized protein from Bacillus subtilis (strain 168).